A 335-amino-acid polypeptide reads, in one-letter code: Acetyl-coenzyme A carboxylase carboxyl transferase subunit alpha (335 aa).

The CoA carboxyltransferase C-terminal domain occupies 48–308; it reads TLELKVDALR…KEILIEELKA (261 aa).

Belongs to the AccA family. As to quaternary structure, acetyl-CoA carboxylase is a heterohexamer composed of biotin carboxyl carrier protein (AccB), biotin carboxylase (AccC) and two subunits each of ACCase subunit alpha (AccA) and ACCase subunit beta (AccD).

It is found in the cytoplasm. It carries out the reaction N(6)-carboxybiotinyl-L-lysyl-[protein] + acetyl-CoA = N(6)-biotinyl-L-lysyl-[protein] + malonyl-CoA. It participates in lipid metabolism; malonyl-CoA biosynthesis; malonyl-CoA from acetyl-CoA: step 1/1. Component of the acetyl coenzyme A carboxylase (ACC) complex. First, biotin carboxylase catalyzes the carboxylation of biotin on its carrier protein (BCCP) and then the CO(2) group is transferred by the carboxyltransferase to acetyl-CoA to form malonyl-CoA. The sequence is that of Acetyl-coenzyme A carboxylase carboxyl transferase subunit alpha from Pelodictyon phaeoclathratiforme (strain DSM 5477 / BU-1).